Consider the following 280-residue polypeptide: MAIRKYKPTSPGRRGASVSDFSEVTRSTPEKSLVRPLHGHGGRNAHGRITTRHKGGGHKRAYRVIDFRRNDKDGVNAKVAHIEYDPNRTANIALLHFLDGEKRYIIAPQGLSQGDVVESGPNADIKPGNNLPLRNIPAGTVIHAVELRPGGGAKLALSAGSSIQLLGKEGSYASLRMPSGEIRRVDVRCRATVGEVGNAEQANINWGKAGRMRWKGKRPSVRGVVMNPVDHPHGGGEGKTSGGRHPVSPWGKPEGRTRHPNKASNKLIVRRRRTGKKHGR.

Disordered stretches follow at residues 1–58 (MAIR…GGGH) and 226–280 (MNPV…KHGR). Basic residues-rich tracts occupy residues 37 to 58 (LHGH…GGGH) and 268 to 280 (IVRR…KHGR).

The protein belongs to the universal ribosomal protein uL2 family. As to quaternary structure, part of the 50S ribosomal subunit. Forms a bridge to the 30S subunit in the 70S ribosome.

One of the primary rRNA binding proteins. Required for association of the 30S and 50S subunits to form the 70S ribosome, for tRNA binding and peptide bond formation. It has been suggested to have peptidyltransferase activity; this is somewhat controversial. Makes several contacts with the 16S rRNA in the 70S ribosome. The polypeptide is Large ribosomal subunit protein uL2 (Mycolicibacterium paratuberculosis (strain ATCC BAA-968 / K-10) (Mycobacterium paratuberculosis)).